We begin with the raw amino-acid sequence, 598 residues long: uncharacterized protein (598 aa).

Asp-397, Asp-408, Glu-506, and Glu-520 together coordinate Mn(2+).

It belongs to the peptidase M24B family. It depends on Mn(2+) as a cofactor.

This is an uncharacterized protein from Schizosaccharomyces pombe (strain 972 / ATCC 24843) (Fission yeast).